The sequence spans 920 residues: Non-structural polyprotein 1A (920 aa).

4 helical membrane passes run 239–259, 286–306, 313–333, and 344–364; these read VFYY…LAIG, VLPT…TLMV, LLAI…LCFM, and GLIA…LTGT. Residues His-461, Asp-489, and Ser-551 each act as charge relay system; for serine protease activity in the active site. Tyr-693 carries the post-translational modification O-(5'-phospho-RNA)-tyrosine. Disordered stretches follow at residues 753–813 and 900–920; these read FDQA…YSQT and NKAP…TITH. A compositionally biased stretch (basic and acidic residues) spans 783 to 795; it reads SQKKEKQLEHEQQ. The segment covering 800 to 813 has biased composition (polar residues); that stretch reads TKPQKNEPQPYSQT.

Belongs to the astroviridae polyprotein 1A family. Monomer. Post-translationally, cleaved by the viral and host proteases. The protease is probably autocatalytically cleaved. Cleaved presumably by viral and host proteases.

Its subcellular location is the host membrane. The catalysed reaction is RNA(n) + a ribonucleoside 5'-triphosphate = RNA(n+1) + diphosphate. In terms of biological role, responsible for the cleavage of the polyprotein into functional products. Covalently attached to the 5' extremity of the genomic and subgenomic RNAs. It may serve as a primer for the replicase. This is Non-structural polyprotein 1A (ORF1) from Human astrovirus-4 (HAstV-4).